We begin with the raw amino-acid sequence, 142 residues long: ATP synthase epsilon chain (142 aa).

It belongs to the ATPase epsilon chain family. F-type ATPases have 2 components, CF(1) - the catalytic core - and CF(0) - the membrane proton channel. CF(1) has five subunits: alpha(3), beta(3), gamma(1), delta(1), epsilon(1). CF(0) has three main subunits: a, b and c.

The protein resides in the cell inner membrane. Its function is as follows. Produces ATP from ADP in the presence of a proton gradient across the membrane. The chain is ATP synthase epsilon chain from Mannheimia succiniciproducens (strain KCTC 0769BP / MBEL55E).